The following is a 423-amino-acid chain: 5-hydroxytryptamine receptor 1A-alpha (423 aa).

The Extracellular portion of the chain corresponds to 1–47 (MDLRATSSNDSNATSGYSDTAAVDWDEGENATGSGSLPDPELSYQII). N-linked (GlcNAc...) asparagine glycosylation is found at asparagine 9, asparagine 12, and asparagine 30. A helical membrane pass occupies residues 48 to 68 (TSLFLGALILCSIFGNSCVVA). The Cytoplasmic portion of the chain corresponds to 69 to 82 (AIALERSLQNVANY). The chain crosses the membrane as a helical span at residues 83 to 107 (LIGSLAVTDLMVSVLVLPMAALYQV). Residues 108–116 (LNKWTLGQD) are Extracellular-facing. The chain crosses the membrane as a helical span at residues 117-141 (ICDLFIALDVLCCTSSILHLCAIAL). Cysteine 118 and cysteine 196 are disulfide-bonded. Residues aspartate 125 and cysteine 129 each coordinate serotonin. The short motif at 142 to 144 (DRY) is the DRY motif; important for ligand-induced conformation changes element. The Cytoplasmic portion of the chain corresponds to 142 to 161 (DRYWAITDPIDYVNKRTPRR). Residues 162 to 183 (AAVLISVTWLIGFSISIPPMLG) form a helical membrane-spanning segment. Residues 184-202 (WRSAEDRANPDACIISQDP) are Extracellular-facing. The chain crosses the membrane as a helical span at residues 203-225 (GYTIYSTFGAFYIPLILMLVLYG). The Cytoplasmic segment spans residues 226–347 (RIFKAARFRI…LARERKTVKT (122 aa)). Residues 311–332 (LPLPNTPQSSSHENINEKTTGT) are disordered. The span at 316 to 329 (TPQSSSHENINEKT) shows a compositional bias: polar residues. Residues serine 320, lysine 346, threonine 347, and glycine 353 each contribute to the 1D-myo-inositol 4-phosphate site. A helical transmembrane segment spans residues 348–371 (LGIIMGTFIFCWLPFFIVALVLPF). Residues 372–379 (CAENCYMP) lie on the Extracellular side of the membrane. A helical membrane pass occupies residues 380–404 (EWLGAVINWLGYSNSLLNPIIYAYF). Residues 397–401 (NPIIY) carry the NPxxY motif; important for ligand-induced conformation changes and signaling motif. Residues phenylalanine 404, asparagine 405, and lysine 406 each coordinate 1D-myo-inositol 4-phosphate. Topologically, residues 405-423 (NKDFQSAFKKILRCKFHRH) are cytoplasmic.

The protein belongs to the G-protein coupled receptor 1 family. 5-hydroxytryptamine receptor subfamily.

It is found in the cell membrane. Its activity is regulated as follows. G-protein coupled receptor activity is regulated by lipids: phosphatidylinositol 4-phosphate increases HTR1A-mediated activity. Functionally, G-protein coupled receptor for 5-hydroxytryptamine (serotonin). Also functions as a receptor for various drugs and psychoactive substances. Ligand binding causes a conformation change that triggers signaling via guanine nucleotide-binding proteins (G proteins) and modulates the activity of downstream effectors, such as adenylate cyclase. HTR1A is coupled to G(i)/G(o) G alpha proteins and mediates inhibitory neurotransmission: signaling inhibits adenylate cyclase activity and activates a phosphatidylinositol-calcium second messenger system that regulates the release of Ca(2+) ions from intracellular stores. Beta-arrestin family members regulate signaling by mediating both receptor desensitization and resensitization processes. The protein is 5-hydroxytryptamine receptor 1A-alpha (htr1aa) of Takifugu rubripes (Japanese pufferfish).